A 381-amino-acid chain; its full sequence is Succinyl-diaminopimelate desuccinylase (381 aa).

Zn(2+) is bound at residue His-68. Asp-70 is a catalytic residue. Residue Asp-101 coordinates Zn(2+). Glu-135 functions as the Proton acceptor in the catalytic mechanism. Residues Glu-136, Glu-164, and His-350 each coordinate Zn(2+).

It belongs to the peptidase M20A family. DapE subfamily. Homodimer. Requires Zn(2+) as cofactor. The cofactor is Co(2+).

The catalysed reaction is N-succinyl-(2S,6S)-2,6-diaminopimelate + H2O = (2S,6S)-2,6-diaminopimelate + succinate. It functions in the pathway amino-acid biosynthesis; L-lysine biosynthesis via DAP pathway; LL-2,6-diaminopimelate from (S)-tetrahydrodipicolinate (succinylase route): step 3/3. Functionally, catalyzes the hydrolysis of N-succinyl-L,L-diaminopimelic acid (SDAP), forming succinate and LL-2,6-diaminopimelate (DAP), an intermediate involved in the bacterial biosynthesis of lysine and meso-diaminopimelic acid, an essential component of bacterial cell walls. The protein is Succinyl-diaminopimelate desuccinylase of Neisseria meningitidis serogroup C / serotype 2a (strain ATCC 700532 / DSM 15464 / FAM18).